We begin with the raw amino-acid sequence, 364 residues long: Geranylgeranyl pyrophosphate synthase janG (364 aa).

The isopentenyl diphosphate site is built by K83, R86, and H115. Residues D122 and D126 each coordinate Mg(2+). R131 lines the dimethylallyl diphosphate pocket. R132 provides a ligand contact to isopentenyl diphosphate. 3 residues coordinate dimethylallyl diphosphate: K209, T210, and Q243. D246 lines the Mg(2+) pocket. 3 residues coordinate dimethylallyl diphosphate: N250, K260, and K270.

Belongs to the FPP/GGPP synthase family. Mg(2+) serves as cofactor.

The enzyme catalyses isopentenyl diphosphate + dimethylallyl diphosphate = (2E)-geranyl diphosphate + diphosphate. It carries out the reaction isopentenyl diphosphate + (2E)-geranyl diphosphate = (2E,6E)-farnesyl diphosphate + diphosphate. The catalysed reaction is isopentenyl diphosphate + (2E,6E)-farnesyl diphosphate = (2E,6E,10E)-geranylgeranyl diphosphate + diphosphate. The protein operates within secondary metabolite biosynthesis. Functionally, geranylgeranyl pyrophosphate synthase; part of the gene cluster that mediates the biosynthesis of the indole diterpenes janthitremanes such as shearinine K or shearinine A. The geranylgeranyl diphosphate (GGPP) synthase janG catalyzes the first step in janthitremane biosynthesis via conversion of farnesyl pyrophosphate and isopentyl pyrophosphate into geranylgeranyl pyrophosphate (GGPP). Condensation of indole-3-glycerol phosphate with GGPP by the prenyl transferase janC then forms 3-geranylgeranylindole (3-GGI). Epoxidation by the FAD-dependent monooxygenase janM leads to a epoxidized-GGI that is substrate of the terpene cyclase janB for cyclization to yield paspaline. Paspaline is subsequently converted to 13-desoxypaspaline by the cytochrome P450 monooxygenase janP, via beta-PC-M6 in a series of alpha-face oxidations. The cytochrome P450 monooxygenase janQ is proposed to carry out sequential beta-face oxidation steps at C-7 and C-13 of 13-desoxypaspaline to form paspalicine and paspalinine respectively. The indole diterpene prenyltransferase janD may then convert paspalinine into shearinine K which is substrate of janO and/or additional enzymes for oxidation and cyclization to generate shearinine A. In Penicillium janthinellum (Penicillium vitale), this protein is Geranylgeranyl pyrophosphate synthase janG.